The following is a 197-amino-acid chain: Fe/S biogenesis protein NfuA (197 aa).

[4Fe-4S] cluster-binding residues include C155 and C158.

Belongs to the NfuA family. In terms of assembly, homodimer. The cofactor is [4Fe-4S] cluster.

Involved in iron-sulfur cluster biogenesis. Binds a 4Fe-4S cluster, can transfer this cluster to apoproteins, and thereby intervenes in the maturation of Fe/S proteins. Could also act as a scaffold/chaperone for damaged Fe/S proteins. The polypeptide is Fe/S biogenesis protein NfuA (Pseudomonas savastanoi pv. phaseolicola (strain 1448A / Race 6) (Pseudomonas syringae pv. phaseolicola (strain 1448A / Race 6))).